The primary structure comprises 323 residues: Calcium homeostasis modulator protein 2 (323 aa).

Residues 1-21 lie on the Cytoplasmic side of the membrane; the sequence is MAALIAENFRFLSLFFKSKDV. Positions 14–39 are central pore; sequence LFFKSKDVMIFNGLVALGTVGSQELF. The chain crosses the membrane as a helical span at residues 22–43; it reads MIFNGLVALGTVGSQELFSVVA. The Extracellular segment spans residues 44-52; sequence FHCPCSPAR. 2 cysteine pairs are disulfide-bonded: Cys46–Cys130 and Cys48–Cys162. Residues 53–76 traverse the membrane as a helical segment; sequence NYLYGLTAIGVPALALFLIGVILN. Residues 77 to 101 lie on the Cytoplasmic side of the membrane; the sequence is NHTWNLVAECQYRRAKNCSAAPTFL. Residues 102–132 traverse the membrane as a helical segment; sequence LLSSILGRAAVAPVTWSVISLLRGEAYVCAL. Over 133 to 179 the chain is Extracellular; sequence SEFVDPSSLTAGDEGFPPDHATEILARFPCGEGPANLSGFREEVSRR. The tract at residues 145–152 is hemichannel docking; it reads DEGFPPDH. Residues 180–206 traverse the membrane as a helical segment; the sequence is LKYESQLFGWLLIGVVAILVFLTKCFK. Residues 207–323 are Cytoplasmic-facing; sequence HYCSPLSYRQ…DNVEMALLTV (117 aa). The tract at residues 214–251 is intersubunit interaction; that stretch reads YRQEAYWAQYRTNEDQLFQRTAEVHSRVLAANNVRRFF.

This sequence belongs to the CALHM family. In terms of assembly, homo-undecamer. Two undecameric hemichannels can assemble in a head-to-head manner to form a gap junction.

Its subcellular location is the cell membrane. The enzyme catalyses ATP(in) = ATP(out). Functionally, pore-forming subunit of Ca(2+) homeostasis modulator channels. Mediates ATP release from astrocytes and ATP-induced Ca(2+) influx in microglia thus regulating neuronal ATP and Ca(2+) homeostasis, synaptic transmission and neuroinflammatory response. May form intercellular gap junctions. The gating mechanism remains unknown. In Rattus norvegicus (Rat), this protein is Calcium homeostasis modulator protein 2 (Calhm2).